We begin with the raw amino-acid sequence, 858 residues long: MAKPTISPGMQQYLDIKENYPDAFLLFRMGDFYELFYDDAVKAAQILEISLTSRNKNAEKPIPMAGVPYHSAQQYIDVLVELGYKVAIAEQMEDPKKAVGVVKREVVQVVTPGTVVESTKPDSANNFLVAIDSQDQQTFGLAYMDVSTGEFQATLLTDFESVRSEILNLKAREIVVGYQLTDEKNHLLTKQMNLLLSYEDERLNDIHLIDEQLTDLEISAAEKLLQYVHRTQKRELSHLQKVVHYEIKDYLQMSYATKNSLDLLENARTSKKHGSLYWLLDETKTAMGTRMLRTWIDRPLVSMNRIKERQDIIQVFLDYFFERNDLTESLKGVYDIERLASRVSFGKANPKDLLQLGQTLSQIPRIKMILQSFNQPELDIVVNKIDTMPELESLINTAIAPEAQATITEGNIIKSGFDKQLDNYRTVMREGTGWIADIEAKERAASGIGTLKIDYNKKDGYYFHVTNSNLSLVPEHFFRKATLKNSERYGTAELAKIEGEVLEAREQSSNLEYDIFMRVRAQVESYIKRLQELAKTIATVDVLQSLAVVAENHHYVRPKFNDEHQIKIKNGRHATVEKVMGVQEYIPNSIYFDSQTDIQLITGPNMSGKSTYMRQLALTVIMAQMGGFVSADEVDLPVFDAIFTRIGAADDLISGQSTFMVEMMEANQAVKRASDKSLILFDELGRGTATYDGMALAQSIIEYIHDRVRAKTMFATHYHELTDLSEQLTRLVNVHVATLERDGEVTFLHKIESGPADKSYGIHVAKIAGLPIDLLDRATDILSQLEADAVQLIVSAPQEAVTADLNEELDSEKQQGQLSLFEEPSNAGRVIEELEAIDIMNLTPMQAMNAIFDLKKLL.

An ATP-binding site is contributed by 603-610 (GPNMSGKS).

This sequence belongs to the DNA mismatch repair MutS family.

Functionally, this protein is involved in the repair of mismatches in DNA. It is possible that it carries out the mismatch recognition step. This protein has a weak ATPase activity. The protein is DNA mismatch repair protein MutS of Streptococcus agalactiae serotype Ia (strain ATCC 27591 / A909 / CDC SS700).